Here is a 227-residue protein sequence, read N- to C-terminus: Phosphatidate cytidylyltransferase (227 aa).

Transmembrane regions (helical) follow at residues 31–51 (FVIA…LVGM), 65–85 (IPYL…LTFL), 93–113 (WLIM…MIGG), 131–151 (WSGL…ASFI), 165–185 (IYLF…DLFI), and 206–226 (GVLD…FISI).

Belongs to the CDS family.

It localises to the cell membrane. The enzyme catalyses a 1,2-diacyl-sn-glycero-3-phosphate + CTP + H(+) = a CDP-1,2-diacyl-sn-glycerol + diphosphate. Its pathway is phospholipid metabolism; CDP-diacylglycerol biosynthesis; CDP-diacylglycerol from sn-glycerol 3-phosphate: step 3/3. The polypeptide is Phosphatidate cytidylyltransferase (cdsA) (Rickettsia felis (strain ATCC VR-1525 / URRWXCal2) (Rickettsia azadi)).